Reading from the N-terminus, the 59-residue chain is Conotoxin reg3.15 (59 aa).

An N-terminal signal peptide occupies residues 1–15 (RVLLTICLLLFPLTA). The propeptide occupies 16–44 (IPLGGDQPAERMRNVRSAVQDPRFDSVGW). Disulfide bonds link Cys-45–Cys-59, Cys-46–Cys-55, and Cys-51–Cys-58.

It belongs to the conotoxin M superfamily. Expressed by the venom duct.

Its subcellular location is the secreted. The polypeptide is Conotoxin reg3.15 (Conus regius (Crown cone)).